We begin with the raw amino-acid sequence, 62 residues long: Ferredoxin-3 (62 aa).

4Fe-4S ferredoxin-type domains lie at 2–28 (SLKI…SAGS) and 29–62 (DIYV…IVKA). Cysteine 9, cysteine 12, cysteine 15, cysteine 19, cysteine 38, cysteine 41, cysteine 50, and cysteine 54 together coordinate [4Fe-4S] cluster.

The cofactor is [4Fe-4S] cluster.

Ferredoxins are iron-sulfur proteins that transfer electrons in a wide variety of metabolic reactions. The chain is Ferredoxin-3 from Chlorobaculum tepidum (strain ATCC 49652 / DSM 12025 / NBRC 103806 / TLS) (Chlorobium tepidum).